The primary structure comprises 462 residues: MKPNIIFVLSLLLILEKQAAVMGQKGGSKGRLPSEFSQFPHGQKGQHYSGQKGKQQTESKGSFSIQYTYHVDANDHDQSRKSQQYDLNALHKTTKSQRHLGGSQQLLHNKQEGRDHDKSKGHFHRVVIHHKGGKAHRGTQNPSQDQGNSPSGKGISSQYSNTEERLWVHGLSKEQTSVSGAQKGRKQGGSQSSYVLQTEELVANKQQRETKNSHQNKGHYQNVVEVREEHSSKVQTSLCPAHQDKLQHGSKDIFSTQDELLVYNKNQHQTKNLNQDQQHGRKANKISYQSSSTEERRLHYGENGVQKDVSQSSIYSQTEEKAQGKSQKQITIPSQEQEHSQKANKISYQSSSTEERRLHYGENGVQKDVSQRSIYSQTEKLVAGKSQIQAPNPKQEPWHGENAKGESGQSTNREQDLLSHEQKGRHQHGSHGGLDIVIIEQEDDSDRHLAQHLNNDRNPLFT.

Residues 1-23 form the signal peptide; the sequence is MKPNIIFVLSLLLILEKQAAVMG. Position 24 is a pyrrolidone carboxylic acid (glutamine 24). A disordered region spans residues 24–61; the sequence is QKGGSKGRLPSEFSQFPHGQKGQHYSGQKGKQQTESKG. Positions 46–61 are enriched in polar residues; sequence QHYSGQKGKQQTESKG. 3 tandem repeats follow at residues 70-129, 141-200, and 201-260. The repeat-rich region stretch occupies residues 70–439; the sequence is HVDANDHDQS…SHGGLDIVII (370 aa). Disordered stretches follow at residues 131 to 157 and 173 to 194; these read KGGK…GISS and KEQT…QSSY. Positions 138 to 157 are enriched in polar residues; sequence GTQNPSQDQGNSPSGKGISS. Positions 164 to 283 are interaction with EPPIN; the sequence is ERLWVHGLSK…NQDQQHGRKA (120 aa). A 2 X 60 AA tandem repeats, type 1 region spans residues 261 to 380; it reads LVYNKNQHQT…QRSIYSQTEK (120 aa). Residues 270 to 432 are disordered; the sequence is TKNLNQDQQH…KGRHQHGSHG (163 aa). Composition is skewed to polar residues over residues 308–317, 324–335, and 343–352; these read DVSQSSIYSQ, GKSQKQITIPSQ, and ANKISYQSSS. The stretch at 381–439 is one 3-2 repeat; sequence LVAGKSQIQAPNPKQEPWHGENAKGESGQSTNREQDLLSHEQKGRHQHGSHGGLDIVII. Over residues 413–424 the composition is skewed to basic and acidic residues; the sequence is REQDLLSHEQKG.

It belongs to the semenogelin family. Occurs in disulfide-linked complexes which may also contain two less abundant 71- and 76-kDa semenogelin-related polypeptides. Interacts with EPPIN (via C-terminus); Cys-239 is a critical amino acid for both binding to EPPIN. In terms of processing, transglutaminase substrate. Rapidly cleaved after ejaculation by KLK3/PSA, resulting in liquefaction of the semen coagulum and the progressive release of motile spermatozoa. As to expression, seminal vesicle.

It is found in the secreted. Its function is as follows. Predominant protein in semen. It participates in the formation of a gel matrix entrapping the accessory gland secretions and ejaculated spermatozoa. Fragments of semenogelin and/or fragments of the related proteins may contribute to the activation of progressive sperm movements as the gel-forming proteins are fragmented by KLK3/PSA. Alpha-inhibin-92 and alpha-inhibin-31, derived from the proteolytic degradation of semenogelin, inhibit the secretion of pituitary follicle-stimulating hormone. The chain is Semenogelin-1 (SEMG1) from Homo sapiens (Human).